The primary structure comprises 527 residues: Amine oxidase [flavin-containing] A (527 aa).

N-acetylmethionine is present on Met1. The Cytoplasmic portion of the chain corresponds to 1–497 (MASQEKASMA…HSFWERNLPS (497 aa)). At Ser383 the chain carries Phosphoserine. The residue at position 406 (Cys406) is an S-8alpha-FAD cysteine. A helical; Anchor for type IV membrane protein transmembrane segment spans residues 498-518 (VGGLLKIIGFSTSITALWIVV). Over 519-527 (YKFKLLTRS) the chain is Mitochondrial intermembrane. The tract at residues 520-522 (KFK) is interaction with membrane phospholipid headgroups.

Belongs to the flavin monoamine oxidase family. As to quaternary structure, monomer, homo- or heterodimer (containing two subunits of similar size). Each subunit contains a covalently bound flavin. Enzymatically active as monomer. FAD serves as cofactor.

It localises to the mitochondrion outer membrane. It carries out the reaction a secondary aliphatic amine + O2 + H2O = a primary amine + an aldehyde + H2O2. The enzyme catalyses a primary methyl amine + O2 + H2O = an aldehyde + H2O2 + NH4(+). It catalyses the reaction (R)-adrenaline + O2 + H2O = (R)-3,4-dihydroxymandelaldehyde + methylamine + H2O2. The catalysed reaction is dopamine + O2 + H2O = 3,4-dihydroxyphenylacetaldehyde + H2O2 + NH4(+). It carries out the reaction tyramine + O2 + H2O = (4-hydroxyphenyl)acetaldehyde + H2O2 + NH4(+). The enzyme catalyses (R)-noradrenaline + O2 + H2O = (R)-3,4-dihydroxymandelaldehyde + H2O2 + NH4(+). It catalyses the reaction serotonin + O2 + H2O = (5-hydroxyindol-3-yl)acetaldehyde + H2O2 + NH4(+). The catalysed reaction is kynuramine + O2 + H2O = 3-(2-aminophenyl)-3-oxopropanal + H2O2 + NH4(+). It carries out the reaction tryptamine + O2 + H2O = indole-3-acetaldehyde + H2O2 + NH4(+). The enzyme catalyses 2-phenylethylamine + O2 + H2O = 2-phenylacetaldehyde + H2O2 + NH4(+). Its function is as follows. Catalyzes the oxidative deamination of primary and some secondary amine such as neurotransmitters, with concomitant reduction of oxygen to hydrogen peroxide and has important functions in the metabolism of neuroactive and vasoactive amines in the central nervous system and peripheral tissues. Preferentially oxidizes serotonin. Also catalyzes the oxidative deamination of kynuramine to 3-(2-aminophenyl)-3-oxopropanal that can spontaneously condense to 4-hydroxyquinoline. This Equus caballus (Horse) protein is Amine oxidase [flavin-containing] A.